The following is a 170-amino-acid chain: Large ribosomal subunit protein uL11 (170 aa).

It belongs to the universal ribosomal protein uL11 family. As to quaternary structure, part of the ribosomal stalk of the 50S ribosomal subunit. Interacts with L10 and the large rRNA to form the base of the stalk. L10 forms an elongated spine to which L12 dimers bind in a sequential fashion forming a multimeric L10(L12)X complex.

Forms part of the ribosomal stalk which helps the ribosome interact with GTP-bound translation factors. This Desulfurococcus amylolyticus (strain DSM 18924 / JCM 16383 / VKM B-2413 / 1221n) (Desulfurococcus kamchatkensis) protein is Large ribosomal subunit protein uL11.